Reading from the N-terminus, the 345-residue chain is tRNA N6-adenosine threonylcarbamoyltransferase (345 aa).

Residues histidine 111 and histidine 115 each coordinate Fe cation. Residues 134-138 (LVSGG), aspartate 167, glycine 180, aspartate 184, and asparagine 278 each bind substrate. Aspartate 306 is a Fe cation binding site.

This sequence belongs to the KAE1 / TsaD family. Requires Fe(2+) as cofactor.

It localises to the cytoplasm. It carries out the reaction L-threonylcarbamoyladenylate + adenosine(37) in tRNA = N(6)-L-threonylcarbamoyladenosine(37) in tRNA + AMP + H(+). In terms of biological role, required for the formation of a threonylcarbamoyl group on adenosine at position 37 (t(6)A37) in tRNAs that read codons beginning with adenine. Is involved in the transfer of the threonylcarbamoyl moiety of threonylcarbamoyl-AMP (TC-AMP) to the N6 group of A37, together with TsaE and TsaB. TsaD likely plays a direct catalytic role in this reaction. The chain is tRNA N6-adenosine threonylcarbamoyltransferase from Cyanothece sp. (strain PCC 7425 / ATCC 29141).